The primary structure comprises 289 residues: Protease HtpX homolog (289 aa).

The next 2 membrane-spanning stretches (helical) occupy residues 7-26 (TAAL…YWVI) and 31-48 (GLII…FSWY). Position 132 (His132) interacts with Zn(2+). The active site involves Glu133. Residue His136 participates in Zn(2+) binding. Helical transmembrane passes span 151–171 (VAGA…FGGG) and 182–202 (LGVL…QLAI). Glu207 is a binding site for Zn(2+).

It belongs to the peptidase M48B family. Zn(2+) serves as cofactor.

Its subcellular location is the cell inner membrane. The protein is Protease HtpX homolog of Nostoc punctiforme (strain ATCC 29133 / PCC 73102).